A 116-amino-acid chain; its full sequence is Ferredoxin-like protein in nif region (116 aa).

The region spanning 2–29 (AYTITSQCISCKLCSSVCPTGAIKVAED) is the 4Fe-4S ferredoxin-type domain. Residues cysteine 9, cysteine 12, cysteine 15, and cysteine 19 each coordinate iron-sulfur cluster.

The chain is Ferredoxin-like protein in nif region (fdxN) from Trichormus azollae (Anabaena azollae).